A 616-amino-acid polypeptide reads, in one-letter code: Chaperone protein HscA (616 aa).

It belongs to the heat shock protein 70 family.

Functionally, chaperone involved in the maturation of iron-sulfur cluster-containing proteins. Has a low intrinsic ATPase activity which is markedly stimulated by HscB. Involved in the maturation of IscU. The chain is Chaperone protein HscA from Salmonella agona (strain SL483).